The chain runs to 213 residues: Protein-L-isoaspartate O-methyltransferase (213 aa).

Residue S64 is part of the active site.

It belongs to the methyltransferase superfamily. L-isoaspartyl/D-aspartyl protein methyltransferase family.

The protein localises to the cytoplasm. It catalyses the reaction [protein]-L-isoaspartate + S-adenosyl-L-methionine = [protein]-L-isoaspartate alpha-methyl ester + S-adenosyl-L-homocysteine. In terms of biological role, catalyzes the methyl esterification of L-isoaspartyl residues in peptides and proteins that result from spontaneous decomposition of normal L-aspartyl and L-asparaginyl residues. It plays a role in the repair and/or degradation of damaged proteins. This chain is Protein-L-isoaspartate O-methyltransferase, found in Flavobacterium johnsoniae (strain ATCC 17061 / DSM 2064 / JCM 8514 / BCRC 14874 / CCUG 350202 / NBRC 14942 / NCIMB 11054 / UW101) (Cytophaga johnsonae).